A 635-amino-acid polypeptide reads, in one-letter code: 1-deoxy-D-xylulose-5-phosphate synthase (635 aa).

Thiamine diphosphate is bound by residues histidine 72 and glycine 113–alanine 115. Aspartate 144 contributes to the Mg(2+) binding site. Thiamine diphosphate is bound by residues glycine 145–alanine 146, asparagine 174, tyrosine 286, and glutamate 369. Asparagine 174 provides a ligand contact to Mg(2+).

Belongs to the transketolase family. DXPS subfamily. As to quaternary structure, homodimer. Mg(2+) serves as cofactor. The cofactor is thiamine diphosphate.

The enzyme catalyses D-glyceraldehyde 3-phosphate + pyruvate + H(+) = 1-deoxy-D-xylulose 5-phosphate + CO2. It functions in the pathway metabolic intermediate biosynthesis; 1-deoxy-D-xylulose 5-phosphate biosynthesis; 1-deoxy-D-xylulose 5-phosphate from D-glyceraldehyde 3-phosphate and pyruvate: step 1/1. Functionally, catalyzes the acyloin condensation reaction between C atoms 2 and 3 of pyruvate and glyceraldehyde 3-phosphate to yield 1-deoxy-D-xylulose-5-phosphate (DXP). This Gloeothece citriformis (strain PCC 7424) (Cyanothece sp. (strain PCC 7424)) protein is 1-deoxy-D-xylulose-5-phosphate synthase.